We begin with the raw amino-acid sequence, 1939 residues long: Myosin-6 (1939 aa).

One can recognise a Myosin N-terminal SH3-like domain in the interval 32-81 (DIRTECFVPDDKEEFVKAKILSREGGKVIAETENGKTVTVKEDQVLQQNP). Residues 85–780 (DKIEDMAMLT…LLGLLEEMRD (696 aa)) form the Myosin motor domain. Residue K129 is modified to N6,N6,N6-trimethyllysine. 178-185 (GESGAGKT) is a binding site for ATP. A Phosphothreonine modification is found at T379. S417 is modified (phosphoserine). 2 actin-binding regions span residues 657–679 (LNKLMTNLRTTHPHFVRCIIPNE) and 759–773 (KFGHTKVFFKAGLLG). One can recognise an IQ domain in the interval 783-812 (LSRIITRMQAQARGQLMRIEFKKIVERRDA). A coiled-coil region spans residues 842–1939 (LKSAETEKEM…GAKQKMHDEE (1098 aa)). Residue S1139 is modified to Phosphoserine. Phosphotyrosine is present on Y1261. S1271 bears the Phosphoserine mark. Residues T1277 and T1284 each carry the phosphothreonine modification. At S1309 the chain carries Phosphoserine. Phosphotyrosine is present on Y1310. Position 1311 is a phosphothreonine (T1311). Phosphoserine is present on S1512. T1515 is subject to Phosphothreonine. 2 stretches are compositionally biased toward basic and acidic residues: residues 1826–1837 (GELEAEQKRNAE) and 1925–1939 (KSRDIGAKQKMHDEE). 2 disordered regions span residues 1826–1849 (GELEAEQKRNAESVKGMRKSERRI) and 1909–1939 (EERADIAESQVNKLRAKSRDIGAKQKMHDEE).

This sequence belongs to the TRAFAC class myosin-kinesin ATPase superfamily. Myosin family. As to quaternary structure, muscle myosin is a hexameric protein that consists of 2 heavy chain subunits (MHC), 2 alkali light chain subunits (MLC) and 2 regulatory light chain subunits (MLC-2).

The protein localises to the cytoplasm. The protein resides in the myofibril. Its function is as follows. Muscle contraction. The chain is Myosin-6 (MYH6) from Homo sapiens (Human).